Consider the following 347-residue polypeptide: Peptidoglycan recognition protein 3 (347 aa).

The N-terminal stretch at 1–26 is a signal peptide; sequence MLVSWDHPKMLPRLLGFLALSLLACG. N-acetylmuramoyl-L-alanine amidase domains lie at 77 to 185 and 206 to 328; these read LQSQ…KACP and PAKF…VSNI. An N-linked (GlcNAc...) asparagine glycan is attached at N120. Disulfide bonds link C184/C306, C200/C244, and C220/C226. Peptidoglycan-binding residues include H237 and Y248. The segment at 270 to 275 is interaction with murein; it reads HTYGYN.

Belongs to the N-acetylmuramoyl-L-alanine amidase 2 family. As to quaternary structure, monomer. Homodimer; disulfide-linked. Heterodimer with PGLYRP4; disulfide-linked. In terms of tissue distribution, detected in lung, spleen and stomach, and at low levels in eye, heart, thymus and testis.

It localises to the secreted. In terms of biological role, pattern receptor that binds to murein peptidoglycans (PGN) of Gram-positive bacteria. Has bactericidal activity towards Gram-positive bacteria. May kill Gram-positive bacteria by interfering with peptidoglycan biosynthesis. Also binds to Gram-negative bacteria, and has bacteriostatic activity towards Gram-negative bacteria. Plays a role in innate immunity. The chain is Peptidoglycan recognition protein 3 (Pglyrp3) from Mus musculus (Mouse).